The chain runs to 365 residues: 1-deoxy-D-xylulose 5-phosphate reductoisomerase (365 aa).

NADPH contacts are provided by Thr-7, Gly-8, Ser-9, Ile-10, Ala-31, Lys-32, Asn-33, and Asn-114. Residue Lys-115 participates in 1-deoxy-D-xylulose 5-phosphate binding. Glu-116 contributes to the NADPH binding site. Asp-134 is a Mn(2+) binding site. The 1-deoxy-D-xylulose 5-phosphate site is built by Ser-135, Glu-136, Ser-158, and His-181. Glu-136 contributes to the Mn(2+) binding site. Gly-187 contributes to the NADPH binding site. Positions 194, 199, 200, and 203 each coordinate 1-deoxy-D-xylulose 5-phosphate. Residue Glu-203 participates in Mn(2+) binding.

The protein belongs to the DXR family. It depends on Mg(2+) as a cofactor. The cofactor is Mn(2+).

The catalysed reaction is 2-C-methyl-D-erythritol 4-phosphate + NADP(+) = 1-deoxy-D-xylulose 5-phosphate + NADPH + H(+). It participates in isoprenoid biosynthesis; isopentenyl diphosphate biosynthesis via DXP pathway; isopentenyl diphosphate from 1-deoxy-D-xylulose 5-phosphate: step 1/6. Functionally, catalyzes the NADPH-dependent rearrangement and reduction of 1-deoxy-D-xylulose-5-phosphate (DXP) to 2-C-methyl-D-erythritol 4-phosphate (MEP). This is 1-deoxy-D-xylulose 5-phosphate reductoisomerase from Campylobacter curvus (strain 525.92).